Reading from the N-terminus, the 140-residue chain is MTQSLVCPDTVSRVSSVLNRNSRQFGKKHLFDQDEETCWNSDQGPSQWVSLEFPQCVQITQLQVQFQGGFSSRHSCLEGSRGGEALSKIVDFYPEDTNALQTFSIPTMEVDRLKLTFEDTTDFFGRVVIYHLRVLGEKAG.

It belongs to the NR2C2AP family. As to quaternary structure, interacts with NR2C2/TR4.

It is found in the nucleus. May act as a repressor of NR2C2-mediated transactivation by suppressing the binding between NR2C2/TR4 and the TR4-response element in target genes. The protein is Nuclear receptor 2C2-associated protein (Nr2c2ap) of Mus musculus (Mouse).